A 369-amino-acid chain; its full sequence is tRNA-specific 2-thiouridylase MnmA (369 aa).

ATP-binding positions include 10 to 17 and L36; that span reads GLSGGVDS. The active-site Nucleophile is the C97. C97 and C196 are disulfide-bonded. G122 lines the ATP pocket. The tract at residues 146 to 148 is interaction with tRNA; that stretch reads KDQ. The active-site Cysteine persulfide intermediate is C196. Residues 301-302 form an interaction with tRNA region; it reads RY.

The protein belongs to the MnmA/TRMU family.

It localises to the cytoplasm. It catalyses the reaction S-sulfanyl-L-cysteinyl-[protein] + uridine(34) in tRNA + AH2 + ATP = 2-thiouridine(34) in tRNA + L-cysteinyl-[protein] + A + AMP + diphosphate + H(+). Its function is as follows. Catalyzes the 2-thiolation of uridine at the wobble position (U34) of tRNA, leading to the formation of s(2)U34. This is tRNA-specific 2-thiouridylase MnmA from Thermosynechococcus vestitus (strain NIES-2133 / IAM M-273 / BP-1).